Here is a 578-residue protein sequence, read N- to C-terminus: Keratin, type II cytoskeletal 1b (578 aa).

The tract at residues 1–163 is head; sequence MSHQFSSQSA…DPEIQRIKTQ (163 aa). The residue at position 95 (Arg95) is an Omega-N-methylarginine. The coil 1A stretch occupies residues 164-200; the sequence is EREQIMVLNNKFASFIDKVRFLEQQNQVLQTKWELLQ. The 314-residue stretch at 164 to 477 folds into the IF rod domain; it reads EREQIMVLNN…QLLEGEESRM (314 aa). Residues 201–219 are linker 1; sequence QVNTSTGTNNLEPLLENYI. Residues 220 to 311 are coil 1B; the sequence is GDLRRQVDLL…LFLTELSQVQ (92 aa). A linker 12 region spans residues 312–335; it reads THISDTNVILSMDNNRSLDLDSII. A coil 2 region spans residues 336–474; the sequence is DAVRTQYELI…TYRQLLEGEE (139 aa). Residues 475–578 form a tail region; sequence SRMSGELQSH…TNTSHRRILE (104 aa). Arg523 is modified (omega-N-methylarginine). Positions 547–556 are enriched in gly residues; that stretch reads GSYGGSGRSG. The interval 547–578 is disordered; that stretch reads GSYGGSGRSGRGSSRVQIIQTSTNTSHRRILE. Polar residues predominate over residues 562 to 571; it reads VQIIQTSTNT.

Belongs to the intermediate filament family. Undergoes deimination of some arginine residues (citrullination). In terms of tissue distribution, expressed exclusively in skin.

This is Keratin, type II cytoskeletal 1b (KRT77) from Homo sapiens (Human).